A 401-amino-acid chain; its full sequence is Probable tRNA sulfurtransferase (401 aa).

Positions 60–165 (EAVMARLKHV…EDATYLTFRD (106 aa)) constitute a THUMP domain. ATP is bound by residues 183-184 (MI), 208-209 (HF), arginine 265, glycine 287, and glutamine 296.

The protein belongs to the ThiI family.

The protein localises to the cytoplasm. The catalysed reaction is [ThiI sulfur-carrier protein]-S-sulfanyl-L-cysteine + a uridine in tRNA + 2 reduced [2Fe-2S]-[ferredoxin] + ATP + H(+) = [ThiI sulfur-carrier protein]-L-cysteine + a 4-thiouridine in tRNA + 2 oxidized [2Fe-2S]-[ferredoxin] + AMP + diphosphate. It catalyses the reaction [ThiS sulfur-carrier protein]-C-terminal Gly-Gly-AMP + S-sulfanyl-L-cysteinyl-[cysteine desulfurase] + AH2 = [ThiS sulfur-carrier protein]-C-terminal-Gly-aminoethanethioate + L-cysteinyl-[cysteine desulfurase] + A + AMP + 2 H(+). It functions in the pathway cofactor biosynthesis; thiamine diphosphate biosynthesis. Functionally, catalyzes the ATP-dependent transfer of a sulfur to tRNA to produce 4-thiouridine in position 8 of tRNAs, which functions as a near-UV photosensor. Also catalyzes the transfer of sulfur to the sulfur carrier protein ThiS, forming ThiS-thiocarboxylate. This is a step in the synthesis of thiazole, in the thiamine biosynthesis pathway. The sulfur is donated as persulfide by IscS. This Bacillus licheniformis (strain ATCC 14580 / DSM 13 / JCM 2505 / CCUG 7422 / NBRC 12200 / NCIMB 9375 / NCTC 10341 / NRRL NRS-1264 / Gibson 46) protein is Probable tRNA sulfurtransferase.